The chain runs to 311 residues: Pseudouridine-5'-phosphate glycosidase (311 aa).

Glutamate 32 serves as the catalytic Proton donor. Positions 96 and 116 each coordinate substrate. Residue aspartate 148 coordinates Mn(2+). 150–152 (SAD) serves as a coordination point for substrate. Lysine 169 (nucleophile) is an active-site residue.

It belongs to the pseudouridine-5'-phosphate glycosidase family. Homotrimer. The cofactor is Mn(2+).

It carries out the reaction D-ribose 5-phosphate + uracil = psi-UMP + H2O. In terms of biological role, catalyzes the reversible cleavage of pseudouridine 5'-phosphate (PsiMP) to ribose 5-phosphate and uracil. Functions biologically in the cleavage direction, as part of a pseudouridine degradation pathway. This is Pseudouridine-5'-phosphate glycosidase from Roseiflexus sp. (strain RS-1).